Here is a 685-residue protein sequence, read N- to C-terminus: uncharacterized protein (685 aa).

Disordered regions lie at residues 78–220, 251–280, 296–332, and 459–657; these read AKQA…HIFD, TQNPVPPPPAPPLTNNQGENNIPTDNRNNE, DNNNNNNNNNNNLGSAMNTPMNNMNKGGPRNNVNNSE, and RNVK…NNKS. A coiled-coil region spans residues 86-139; the sequence is KKKETENVEEEGEEKEKKIDDESFPDLLESTEKMKSELSKEKDKKKKQLKDGKK. 2 stretches are compositionally biased toward basic and acidic residues: residues 115 to 127 and 165 to 181; these read STEKMKSELSKEK and FNDKKKYNMYDGNKKND. A compositionally biased stretch (low complexity) spans 190-215; the sequence is NNQQNDMNNNNQNNQNNMNNNNNNNN. Over residues 263-276 the composition is skewed to polar residues; sequence LTNNQGENNIPTDN. Over residues 297–307 the composition is skewed to low complexity; it reads NNNNNNNNNNN. Over residues 308-331 the composition is skewed to polar residues; the sequence is LGSAMNTPMNNMNKGGPRNNVNNS. 2 stretches are compositionally biased toward low complexity: residues 460 to 474 and 481 to 498; these read NVKNLGQNNNEGNTN and NNRGQGNNNNNNNNNNFN. Residues 499 to 515 are compositionally biased toward basic and acidic residues; it reads RRNDKNDNRNFRRKDID. Positions 520–530 are enriched in polar residues; the sequence is WRNTANPTQEE. Residues 531–590 are compositionally biased toward low complexity; that stretch reads NNNNMNHNNNYNNNNNNNNNNNNNNNNNNNTNHGKNFRNFNNLNNMKNNNSSNNKMMGMN. Positions 591–602 are enriched in polar residues; it reads HMQQKGMNSSTG. The segment covering 617 to 656 has biased composition (low complexity); sequence NNKMYKNNMGNANNNNNNNAVNTNFNNNNNNGNFHMNNNK.

This is an uncharacterized protein from Plasmodium falciparum (isolate 3D7).